We begin with the raw amino-acid sequence, 363 residues long: Dihydroorotate dehydrogenase (quinone) (363 aa).

FMN-binding positions include Ala62–Lys66 and Thr86. Lys66 lines the substrate pocket. A substrate-binding site is contributed by Asn111–Phe115. FMN contacts are provided by Asn140 and Asn171. Asn171 is a substrate binding site. Ser174 acts as the Nucleophile in catalysis. Asn176 contacts substrate. FMN is bound by residues Lys216 and Ser244. Asn245 to Thr246 lines the substrate pocket. Residues Gly266, Gly295, and Tyr316–Thr317 each bind FMN.

The protein belongs to the dihydroorotate dehydrogenase family. Type 2 subfamily. Monomer. FMN serves as cofactor.

It localises to the cell membrane. The enzyme catalyses (S)-dihydroorotate + a quinone = orotate + a quinol. It functions in the pathway pyrimidine metabolism; UMP biosynthesis via de novo pathway; orotate from (S)-dihydroorotate (quinone route): step 1/1. Functionally, catalyzes the conversion of dihydroorotate to orotate with quinone as electron acceptor. The protein is Dihydroorotate dehydrogenase (quinone) of Chelativorans sp. (strain BNC1).